We begin with the raw amino-acid sequence, 444 residues long: Multidrug resistance protein MdtA (444 aa).

Positions 1-20 (MKSQSKRTSRLFVFVGVVVA) are cleaved as a signal peptide. Positions 37–52 (NNTSGAQQSARGQDTS) are enriched in polar residues. Disordered regions lie at residues 37 to 60 (NNTS…RNTP) and 398 to 444 (TPRS…AEKS). Over residues 406–419 (ANPASAEKAAAEAE) the composition is skewed to low complexity. Positions 435–444 (ARSTTAAEKS) are enriched in polar residues.

Belongs to the membrane fusion protein (MFP) (TC 8.A.1) family. As to quaternary structure, part of a tripartite efflux system composed of MdtA, MdtB and MdtC.

It localises to the cell inner membrane. This is Multidrug resistance protein MdtA from Yersinia pestis bv. Antiqua (strain Antiqua).